Consider the following 450-residue polypeptide: Pancreatic triacylglycerol lipase (450 aa).

Intrachain disulfides connect C4/C10, C91/C102, and C91/C104. S153 functions as the Nucleophile in the catalytic mechanism. N167 is a glycosylation site (N-linked (GlcNAc...) asparagine). D177 serves as the catalytic Charge relay system. Ca(2+) contacts are provided by E188, R191, D193, and D196. A disulfide bond links C238 and C262. H264 functions as the Charge relay system in the catalytic mechanism. 3 disulfides stabilise this stretch: C286-C297, C300-C305, and C434-C450. One can recognise a PLAT domain in the interval 339–450 (WRYKVSVTLS…EEVLLTLNPC (112 aa)).

This sequence belongs to the AB hydrolase superfamily. Lipase family. In terms of assembly, forms a 1:1 stoichiometric complex with (pro)colipase/CLPS.

The protein localises to the secreted. The enzyme catalyses a triacylglycerol + H2O = a diacylglycerol + a fatty acid + H(+). The catalysed reaction is 1,2,3-tributanoylglycerol + H2O = dibutanoylglycerol + butanoate + H(+). It catalyses the reaction 1,2,3-tri-(9Z-octadecenoyl)-glycerol + H2O = di-(9Z)-octadecenoylglycerol + (9Z)-octadecenoate + H(+). It carries out the reaction all-trans-retinyl hexadecanoate + H2O = all-trans-retinol + hexadecanoate + H(+). The enzyme catalyses 1,2-di-(9Z-octadecenoyl)-glycerol + H2O = (9Z-octadecenoyl)-glycerol + (9Z)-octadecenoate + H(+). With respect to regulation, inhibited by bile salts, is reactivated by (pro)colipase/CLPS. Its function is as follows. Plays an important role in fat metabolism. It preferentially splits the esters of long-chain fatty acids at positions 1 and 3, producing mainly 2-monoacylglycerol and free fatty acids, and shows considerably higher activity against insoluble emulsified substrates than against soluble ones. The chain is Pancreatic triacylglycerol lipase (PNLIP) from Sus scrofa (Pig).